A 469-amino-acid chain; its full sequence is 6-phosphofructo-2-kinase/fructose-2,6-bisphosphatase 4 (469 aa).

Residues 1 to 249 (MASPRELTQN…YYLMNIHVTP (249 aa)) form a 6-phosphofructo-2-kinase region. At Ser-29 the chain carries Phosphoserine; by PKC. Position 46 to 54 (46 to 54 (GLPARGKTY)) interacts with ATP. The beta-D-fructose 6-phosphate site is built by Arg-79 and Arg-103. Asp-129 is an active-site residue. Residues Thr-131 and Arg-137 each contribute to the beta-D-fructose 6-phosphate site. The active site involves Cys-159. 168–173 (NIVQVK) is an ATP binding site. Beta-D-fructose 6-phosphate-binding residues include Lys-173, Arg-194, and Tyr-198. The interval 250–469 (RSIYLCRHGE…EALVTVPAHQ (220 aa)) is fructose-2,6-bisphosphatase. Position 256 (Arg-256) interacts with beta-D-fructose 2,6-bisphosphate. The active-site Tele-phosphohistidine intermediate is the His-257. 3 residues coordinate beta-D-fructose 2,6-bisphosphate: Asn-263, Gly-269, and Arg-306. The active-site Proton donor/acceptor is Glu-326. Beta-D-fructose 2,6-bisphosphate contacts are provided by Tyr-337, Arg-351, Lys-355, Tyr-366, Gln-392, and Arg-396. 348–351 (FALR) lines the ATP pocket. Residues 392-396 (QAVMR) and Tyr-428 contribute to the ATP site. Thr-444 is modified (phosphothreonine; by PKC).

It in the C-terminal section; belongs to the phosphoglycerate mutase family. As to quaternary structure, homodimer. In terms of tissue distribution, testis.

It carries out the reaction beta-D-fructose 2,6-bisphosphate + H2O = beta-D-fructose 6-phosphate + phosphate. The catalysed reaction is beta-D-fructose 6-phosphate + ATP = beta-D-fructose 2,6-bisphosphate + ADP + H(+). Its activity is regulated as follows. The most important regulatory mechanism of these opposing activities is by phosphorylation and dephosphorylation of the enzyme. Its function is as follows. Synthesis and degradation of fructose 2,6-bisphosphate. The chain is 6-phosphofructo-2-kinase/fructose-2,6-bisphosphatase 4 (Pfkfb4) from Rattus norvegicus (Rat).